A 64-amino-acid chain; its full sequence is DNA gyrase inhibitor YacG (64 aa).

Positions 9, 12, 28, and 32 each coordinate Zn(2+). The segment at 45–64 (KRIPSSGDLSESDDWSEEQK) is disordered. The span at 54–64 (SESDDWSEEQK) shows a compositional bias: acidic residues.

The protein belongs to the DNA gyrase inhibitor YacG family. Interacts with GyrB. Requires Zn(2+) as cofactor.

Inhibits all the catalytic activities of DNA gyrase by preventing its interaction with DNA. Acts by binding directly to the C-terminal domain of GyrB, which probably disrupts DNA binding by the gyrase. The polypeptide is DNA gyrase inhibitor YacG (Citrobacter koseri (strain ATCC BAA-895 / CDC 4225-83 / SGSC4696)).